Reading from the N-terminus, the 361-residue chain is POU domain, class 3, transcription factor 4 (361 aa).

Disordered stretches follow at residues 99 to 131 (PHVA…GQPL) and 144 to 192 (MLEH…PTSD). The span at 119 to 131 (APNSSITNSGQPL) shows a compositional bias: polar residues. The span at 165-183 (VLREPPDHGELGSHHCQDH) shows a compositional bias: basic and acidic residues. One can recognise a POU-specific domain in the interval 186 to 260 (EETPTSDELE…LLNKWLEEAD (75 aa)). Ser-265 bears the Phosphoserine mark. The segment at residues 278–337 (KRKKRTSIEVSVKGVLETHFLKCPKPAAQEISSLADSLQLEKEVVRVWFCNRRQKEKRMT) is a DNA-binding region (homeobox). Residues 334 to 361 (KRMTPPGDQQPHEVYSHTVKTDASCHDL) form a disordered region. The segment covering 343–361 (QPHEVYSHTVKTDASCHDL) has biased composition (basic and acidic residues).

This sequence belongs to the POU transcription factor family. Class-3 subfamily.

It localises to the nucleus. Its function is as follows. Probable transcription factor which exert its primary action widely during early neural development and in a very limited set of neurons in the mature brain. The chain is POU domain, class 3, transcription factor 4 (Pou3f4) from Mesocricetus auratus (Golden hamster).